Here is a 389-residue protein sequence, read N- to C-terminus: P2X purinoceptor 6 (389 aa).

At 1 to 45 the chain is on the cytoplasmic side; sequence MQLQPAGTGNMASAAAAALVSWGFLDYKTEKYVLTRNCRVGVSQR. Residues 46–66 traverse the membrane as a helical segment; sequence LLQLAVVVYVIGWALLAKKGY. At 67–335 the chain is on the extracellular side; sequence QERDLAPQTS…LVTGQAGKFA (269 aa). Intrachain disulfides connect Cys129-Cys179, Cys140-Cys163, and Cys146-Cys173. Residues Asn167, Asn197, and Asn212 are each glycosylated (N-linked (GlcNAc...) asparagine). Disulfide bonds link Cys230–Cys240 and Cys274–Cys283. Residues 336–356 traverse the membrane as a helical segment; sequence LIPTAITVGTGAAWLGMVTFL. At 357-389 the chain is on the cytoplasmic side; it reads CDLLLLYVDREAGFYWRTKYEEARAPKTTTNSS.

Belongs to the P2X receptor family. As to quaternary structure, unlike most P2RXs, P2RX6 does not seem to form homotrimers. P2RX6 are likely to form as obligate heteromers with other P2RXs subunits. Forms heterotrimer with P2RX2 with a variable subunit stoichiometry determined by subunit expression levels. Forms heterotrimer with P2RX4; functional differences between homomeric P2RX4 and P2RX4/6 heterotrimer are minor. Forms a P2RX2/P2RX4/P2RX6 heterotrimer. Interacts with SF3A1; resulting in a reduction of the splicing activity. In terms of processing, N-glycosylated. N-linked glycosylation can affect trafficking to the membrane and function. Predominantly expressed in skeletal muscle. Also expressed in lung.

The protein localises to the cell membrane. It is found in the endoplasmic reticulum. The protein resides in the nucleus. It localises to the nucleus inner membrane. The enzyme catalyses Ca(2+)(in) = Ca(2+)(out). Acts as a modulatory subunit rather than a functional channel. Unlike other P2XRs members, P2RX6 does not seem to form functional homotrimers. P2RX6 requires the presence of P2RX4 or P2RX2 to form functional heterotrimeric receptors at the plasma membrane. P2RX6 can be translocated to the nucleus, where it interacts with the splicing factor (SF3A1), to reduce the incidence of mRNA splicing. May function as a nuclear regulator of post-transcriptional modifications in neurons. The sequence is that of P2X purinoceptor 6 (P2rx6) from Mus musculus (Mouse).